Consider the following 420-residue polypeptide: Glucose-1-phosphate adenylyltransferase (420 aa).

Alpha-D-glucose 1-phosphate is bound by residues Y108, G173, 188 to 189 (EK), and S206.

Belongs to the bacterial/plant glucose-1-phosphate adenylyltransferase family. As to quaternary structure, homotetramer.

It carries out the reaction alpha-D-glucose 1-phosphate + ATP + H(+) = ADP-alpha-D-glucose + diphosphate. Its pathway is glycan biosynthesis; glycogen biosynthesis. In terms of biological role, involved in the biosynthesis of ADP-glucose, a building block required for the elongation reactions to produce glycogen. Catalyzes the reaction between ATP and alpha-D-glucose 1-phosphate (G1P) to produce pyrophosphate and ADP-Glc. This chain is Glucose-1-phosphate adenylyltransferase, found in Paraburkholderia phytofirmans (strain DSM 17436 / LMG 22146 / PsJN) (Burkholderia phytofirmans).